A 115-amino-acid polypeptide reads, in one-letter code: Macroconotoxin Mu8.1 (115 aa).

Residues 1–21 (MDMKMTFSGLVLVVLVTTVVG) form the signal peptide. The propeptide occupies 22 to 26 (SSVRR). Cystine bridges form between Cys36–Cys77, Cys44–Cys60, Cys48–Cys56, Cys83–Cys115, and Cys87–Cys97. Glu40 provides a ligand contact to Zn(2+). A Zn(2+)-binding site is contributed by His68.

Mostly found as a homodimer in solution; non-covalently bound. As to expression, expressed by the venom duct.

The protein localises to the secreted. In terms of biological role, modestly and reversibly inhibits Cav2.3/CACNA1E (IC(50)=5.8 uM) recombinantly expressed in HEK293 cells without affecting the voltage dependence of activation. In mouse DRG sensory neurons, modulates depolarization-induced calcium influx. The polypeptide is Macroconotoxin Mu8.1 (Conus mucronatus (Pointed cone)).